A 154-amino-acid chain; its full sequence is Ribonuclease H (154 aa).

The 142-residue stretch at M1–E142 folds into the RNase H type-1 domain. Residues D10, E48, D70, and D134 each coordinate Mg(2+).

It belongs to the RNase H family. As to quaternary structure, monomer. The cofactor is Mg(2+).

Its subcellular location is the cytoplasm. It catalyses the reaction Endonucleolytic cleavage to 5'-phosphomonoester.. Endonuclease that specifically degrades the RNA of RNA-DNA hybrids. This is Ribonuclease H from Actinobacillus succinogenes (strain ATCC 55618 / DSM 22257 / CCUG 43843 / 130Z).